A 523-amino-acid polypeptide reads, in one-letter code: Mogroside I-A1 synthase (523 aa).

Catalysis depends on His-39, which acts as the Proton acceptor. Asp-136 (charge relay) is an active-site residue. 8 residues coordinate UDP-alpha-D-glucose: Ser-311, Gln-374, Trp-392, Asn-393, Ser-394, Glu-397, Asp-413, and Gln-414.

This sequence belongs to the UDP-glycosyltransferase family. In terms of tissue distribution, highly expressed in young fruits 15 and 34 days after anthesis (15-DAA and 34-DAA).

It carries out the reaction mogrol + UDP-alpha-D-glucose = mogroside I-A1 + UDP + H(+). The enzyme catalyses mogroside I-A1 + UDP-alpha-D-glucose = mogroside IIE + UDP + H(+). The catalysed reaction is mogroside IE + UDP-alpha-D-glucose = mogroside IIE + UDP + H(+). It catalyses the reaction mogroside II-A1 + UDP-alpha-D-glucose = mogroside IIIX + UDP + H(+). It carries out the reaction mogroside II-A + UDP-alpha-D-glucose = mogroside III + UDP + H(+). The enzyme catalyses mogroside IIE + UDP-alpha-D-glucose = mogroside III-C3(1-&gt;6) + UDP + H(+). The catalysed reaction is mogroside III + UDP-alpha-D-glucose = isomogroside IV + UDP + H(+). It catalyses the reaction mogroside III + UDP-alpha-D-glucose = mogroside IV + UDP + H(+). It carries out the reaction mogroside IIIX + UDP-alpha-D-glucose = mogroside IVA + UDP + H(+). The enzyme catalyses siamenoside I + UDP-alpha-D-glucose = isomogroside V + UDP + H(+). Its pathway is secondary metabolite biosynthesis; terpenoid biosynthesis. UDP-glycosyltransferase involved in the biosynthesis of cucurbitacin and mogroside tetracyclic triterpene natural products (e.g. siamenoside I and mogrosides IV, V and VI). Cucurbitacins have cytotoxic properties and exhibit deterrent taste as a defense barrier against herbivores. Mogrosides are nonsugar highly oxygenated compounds used as high-intensity zero-calorie sweeteners; they also possess pharmacological properties such as regulating immunity, lowering blood sugar and lipid levels, protecting the liver, and acting as antioxidants and antitumor agents. Catalyzes the C24 primary glucosylation of mogrol and mogroside I-E1, and the C3 primary glucosylation of mogroside I-A1, mogroside II-A1 and mogroside II-A. Also supports branching glucosylations of mogroside II-E, mogroside III, mogroside IIIx and siamenoside I. In Siraitia grosvenorii (Monk's fruit), this protein is Mogroside I-A1 synthase.